Reading from the N-terminus, the 261-residue chain is MTHQTHAYHMVNPSPWPLTGALSALLMTSGLTMWFHFNSMLLLSLGLLTNTLTMYQWWRDIIRESTFQGHHTSVVQKGLRYGMILFIISEVLFFTGFFWAFYHSSLAPTPELGGCWPPTGIHPLNPLEVPLLNTSILLASGVSITWAHHSLMEGDRKHMIQALSITIALGVYFTLLQASEYYEAPFTISDGVYGSTFFVATGFHGLHVIIGSTFLAVCLLRQLKFHFTSNHHFGFEAAAWYWHFVDVVWLFLYVSIYWWGS.

Residues 1-15 are Mitochondrial matrix-facing; it reads MTHQTHAYHMVNPSP. A helical membrane pass occupies residues 16–34; it reads WPLTGALSALLMTSGLTMW. Over 35 to 40 the chain is Mitochondrial intermembrane; sequence FHFNSM. Residues 41–66 traverse the membrane as a helical segment; that stretch reads LLLSLGLLTNTLTMYQWWRDIIREST. Residues 67–72 lie on the Mitochondrial matrix side of the membrane; sequence FQGHHT. The chain crosses the membrane as a helical span at residues 73-105; sequence SVVQKGLRYGMILFIISEVLFFTGFFWAFYHSS. Residues 106–128 are Mitochondrial intermembrane-facing; it reads LAPTPELGGCWPPTGIHPLNPLE. The helical transmembrane segment at 129-152 threads the bilayer; that stretch reads VPLLNTSILLASGVSITWAHHSLM. Residues 153 to 155 are Mitochondrial matrix-facing; that stretch reads EGD. Residues 156-183 traverse the membrane as a helical segment; that stretch reads RKHMIQALSITIALGVYFTLLQASEYYE. Residues 184-190 are Mitochondrial intermembrane-facing; sequence APFTISD. The helical transmembrane segment at 191–223 threads the bilayer; that stretch reads GVYGSTFFVATGFHGLHVIIGSTFLAVCLLRQL. The Mitochondrial matrix segment spans residues 224 to 232; sequence KFHFTSNHH. The helical transmembrane segment at 233 to 256 threads the bilayer; that stretch reads FGFEAAAWYWHFVDVVWLFLYVSI. Residues 257–261 are Mitochondrial intermembrane-facing; that stretch reads YWWGS.

Belongs to the cytochrome c oxidase subunit 3 family. In terms of assembly, component of the cytochrome c oxidase (complex IV, CIV), a multisubunit enzyme composed of 14 subunits. The complex is composed of a catalytic core of 3 subunits MT-CO1, MT-CO2 and MT-CO3, encoded in the mitochondrial DNA, and 11 supernumerary subunits COX4I, COX5A, COX5B, COX6A, COX6B, COX6C, COX7A, COX7B, COX7C, COX8 and NDUFA4, which are encoded in the nuclear genome. The complex exists as a monomer or a dimer and forms supercomplexes (SCs) in the inner mitochondrial membrane with NADH-ubiquinone oxidoreductase (complex I, CI) and ubiquinol-cytochrome c oxidoreductase (cytochrome b-c1 complex, complex III, CIII), resulting in different assemblies (supercomplex SCI(1)III(2)IV(1) and megacomplex MCI(2)III(2)IV(2)).

It localises to the mitochondrion inner membrane. It catalyses the reaction 4 Fe(II)-[cytochrome c] + O2 + 8 H(+)(in) = 4 Fe(III)-[cytochrome c] + 2 H2O + 4 H(+)(out). Functionally, component of the cytochrome c oxidase, the last enzyme in the mitochondrial electron transport chain which drives oxidative phosphorylation. The respiratory chain contains 3 multisubunit complexes succinate dehydrogenase (complex II, CII), ubiquinol-cytochrome c oxidoreductase (cytochrome b-c1 complex, complex III, CIII) and cytochrome c oxidase (complex IV, CIV), that cooperate to transfer electrons derived from NADH and succinate to molecular oxygen, creating an electrochemical gradient over the inner membrane that drives transmembrane transport and the ATP synthase. Cytochrome c oxidase is the component of the respiratory chain that catalyzes the reduction of oxygen to water. Electrons originating from reduced cytochrome c in the intermembrane space (IMS) are transferred via the dinuclear copper A center (CU(A)) of subunit 2 and heme A of subunit 1 to the active site in subunit 1, a binuclear center (BNC) formed by heme A3 and copper B (CU(B)). The BNC reduces molecular oxygen to 2 water molecules using 4 electrons from cytochrome c in the IMS and 4 protons from the mitochondrial matrix. This Sus scrofa (Pig) protein is Cytochrome c oxidase subunit 3 (MT-CO3).